Consider the following 475-residue polypeptide: Sensor histidine kinase GlrK (475 aa).

Residues 1 to 13 (MKRWPVFPRSLRQ) lie on the Cytoplasmic side of the membrane. Residues 14–34 (LVMLAFLLILLPLLVLAWQAW) traverse the membrane as a helical segment. The Periplasmic segment spans residues 35 to 173 (QSLNALSDQA…LQREIAERGQ (139 aa)). A helical membrane pass occupies residues 174–194 (YFGWQSLVLFLVSLVMVLLFT). Residues 195-475 (RMIIGPVKNI…IELPSSKNTK (281 aa)) are Cytoplasmic-facing. Residues 256 to 472 (HLSHELKTPL…CFRIELPSSK (217 aa)) enclose the Histidine kinase domain. Residue H259 is modified to Phosphohistidine; by autocatalysis.

Post-translationally, autophosphorylated.

It is found in the cell inner membrane. It catalyses the reaction ATP + protein L-histidine = ADP + protein N-phospho-L-histidine.. In terms of biological role, member of the two-component regulatory system GlrR/GlrK that up-regulates transcription of the glmY sRNA when cells enter the stationary growth phase. Activates GlrR by phosphorylation. The chain is Sensor histidine kinase GlrK (glrK) from Escherichia coli (strain K12).